Consider the following 850-residue polypeptide: Response regulator sskA (850 aa).

2 disordered regions span residues 1–225 (MPDR…GASS) and 419–542 (IPQR…GQSP). Positions 7–25 (SQLLKSKLLRRSSTTATTS) are enriched in low complexity. Polar residues predominate over residues 117-138 (GANSRQEGSQNGSIQQSPTFTR). Basic and acidic residues predominate over residues 144 to 163 (QLTEEKDKGKLQSREGDQRG). The span at 177–196 (SDPQYSLTTELANKPSTPQT) shows a compositional bias: polar residues. Residues 436–445 (HHSEPGEHGE) are compositionally biased toward basic and acidic residues. The segment covering 477–490 (PSISILTTDSNMAS) has biased composition (polar residues). Pro residues predominate over residues 492–511 (PQPPVAAPQVPTPPGPPPES). Positions 558-719 (NVLIVEDNII…WLEQKVTEWG (162 aa)) constitute a Response regulatory domain. Asp607 carries the post-translational modification 4-aspartylphosphate. The interval 736–850 (FADEPQSSSP…DEEQQALDAT (115 aa)) is disordered. A compositionally biased stretch (low complexity) spans 762-782 (SSRTSTSPSSAAVNATARAFA). Over residues 819–828 (TLDSPASPLT) the composition is skewed to polar residues. A compositionally biased stretch (acidic residues) spans 839 to 850 (PGDEEQQALDAT).

It belongs to the SSK1 family.

The protein localises to the cytoplasm. Functionally, final receptor of the osmolarity two-component system regulatory system, which controls activity of the sakA mitogen-activated protein kinase (MAPK) pathway in response to changes in the osmolarity of the extracellular environment. Regulates the germination in the airways that drives enhanced disease initiation and inflammation in the lungs. In Aspergillus fumigatus (strain ATCC MYA-4609 / CBS 101355 / FGSC A1100 / Af293) (Neosartorya fumigata), this protein is Response regulator sskA.